Here is a 172-residue protein sequence, read N- to C-terminus: uncharacterized protein (172 aa).

It belongs to the flavoredoxin family. It depends on FMN as a cofactor.

This is an uncharacterized protein from Pyrococcus horikoshii (strain ATCC 700860 / DSM 12428 / JCM 9974 / NBRC 100139 / OT-3).